The sequence spans 102 residues: Protein PAPPAS (102 aa).

2 consecutive transmembrane segments (helical) span residues 13–33 and 82–102; these read LFLT…FVKW and IGSD…FFFF.

Expressed in placenta with lower expression in brain, kidney and testis.

Its subcellular location is the endoplasmic reticulum membrane. The sequence is that of Protein PAPPAS (PAPPA-AS1) from Homo sapiens (Human).